The following is a 266-amino-acid chain: F-box only protein 50 (266 aa).

Residues 1–16 (MEKTQDRDTLSGRMEA) show a composition bias toward basic and acidic residues. The interval 1–53 (MEKTQDRDTLSGRMEAEGSLNSEELPPHPQSPPPPPSPRSPTSPVTPELPQPN) is disordered. Residues 27 to 41 (PHPQSPPPPPSPRSP) are compositionally biased toward pro residues. Phosphoserine occurs at positions 31, 37, 40, and 43. A Phosphothreonine modification is found at T46. An FBA domain is found at 86–264 (LFLERPLYRN…VTDSSVSVQL (179 aa)).

As to expression, strongly expressed in kidney. Weakly expressed in stomach, colon, duodenum and prostate.

The protein resides in the cytoplasm. In terms of biological role, promotes cell proliferation. The polypeptide is F-box only protein 50 (Nccrp1) (Mus musculus (Mouse)).